Here is a 289-residue protein sequence, read N- to C-terminus: BTB/POZ domain-containing protein KCTD7 (289 aa).

Residues 1 to 10 (MVVVTGQSKG) show a composition bias toward polar residues. Residues 1 to 35 (MVVVTGQSKGSGDPDEAMSSSDAEDDFQEPATPTA) are disordered. Positions 51 to 149 (EVVPLNVGGM…HLEDVQPLKG (99 aa)) constitute a BTB domain.

The protein localises to the cell membrane. The protein resides in the cytoplasm. It is found in the cytosol. Functionally, may be involved in the control of excitability of cortical neurons. The chain is BTB/POZ domain-containing protein KCTD7 (KCTD7) from Gallus gallus (Chicken).